The chain runs to 601 residues: Mitochondrial tRNA methylthiotransferase CDK5RAP1 (601 aa).

The N-terminal 33 residues, M1–H33, are a transit peptide targeting the mitochondrion. Positions R100–S220 constitute an MTTase N-terminal domain. [4Fe-4S] cluster-binding residues include C109, C145, C183, C258, C262, and C265. In terms of domain architecture, Radical SAM core spans S244 to K512. Residues Q515–C590 form the TRAM domain.

Belongs to the methylthiotransferase family. MiaB subfamily. As to quaternary structure, interacts with CDK5R1 (p35 form). CDK5RAP1, CDK5RAP2 and CDK5RAP3 show competitive binding to CDK5R1. Forms a complex with CDK5R1 and CDK5. Requires [4Fe-4S] cluster as cofactor. As to expression, expressed in heart, brain, placenta, lung, liver, skeletal muscle, kidney and pancreas. Expressed in neurons of central nervous tissue. Mainly expressed in brain, placenta and testis. In terms of tissue distribution, high expression in placenta and lung.

It is found in the mitochondrion. It catalyses the reaction N(6)-dimethylallyladenosine(37) in tRNA + (sulfur carrier)-SH + AH2 + 2 S-adenosyl-L-methionine = 2-methylsulfanyl-N(6)-dimethylallyladenosine(37) in tRNA + (sulfur carrier)-H + 5'-deoxyadenosine + L-methionine + A + S-adenosyl-L-homocysteine + 2 H(+). Functionally, methylthiotransferase that catalyzes the conversion of N6-(dimethylallyl)adenosine (i(6)A) to 2-methylthio-N6-(dimethylallyl)adenosine (ms(2)i(6)A) at position 37 (adjacent to the 3'-end of the anticodon) of four mitochondrial DNA-encoded tRNAs (Ser(UCN), Phe, Tyr and Trp). Essential for efficient and highly accurate protein translation by the ribosome. Specifically inhibits CDK5 activation by CDK5R1. Essential for efficient mitochondrial protein synthesis and respiratory chain; shows pathological consequences in mitochondrial disease. The polypeptide is Mitochondrial tRNA methylthiotransferase CDK5RAP1 (Homo sapiens (Human)).